A 436-amino-acid chain; its full sequence is GTPase Der (436 aa).

2 consecutive EngA-type G domains span residues 4-167 (PTIA…PNEE) and 175-351 (IKFS…QSQN). GTP-binding positions include 10-17 (GRPNVGKS), 57-61 (DTGGI), 119-122 (NKVD), 181-188 (GRPNVGKS), 229-233 (DTAGM), and 294-297 (NKWD). One can recognise a KH-like domain in the interval 352 to 436 (TRIPSAVLND…PIHLIARKRK (85 aa)).

This sequence belongs to the TRAFAC class TrmE-Era-EngA-EngB-Septin-like GTPase superfamily. EngA (Der) GTPase family. As to quaternary structure, associates with the 50S ribosomal subunit.

GTPase that plays an essential role in the late steps of ribosome biogenesis. This is GTPase Der from Streptococcus gordonii (strain Challis / ATCC 35105 / BCRC 15272 / CH1 / DL1 / V288).